The sequence spans 339 residues: 4-amino-5-hydroxymethyl-2-methylpyrimidine phosphate synthase (339 aa).

Lysine 62 is subject to N6-(pyridoxal phosphate)lysine. The active site involves histidine 66. Residue 115-118 (GEFG) coordinates pyridoxal 5'-phosphate. The short motif at 195-199 (CCCFC) is the CCCFC; essential for catalytic activity, may be the site of iron coordination element.

It belongs to the NMT1/THI5 family. As to quaternary structure, homodimer. Fe(3+) is required as a cofactor.

It catalyses the reaction N(6)-(pyridoxal phosphate)-L-lysyl-[4-amino-5-hydroxymethyl-2-methylpyrimidine phosphate synthase] + L-histidyl-[4-amino-5-hydroxymethyl-2-methylpyrimidine phosphate synthase] + 2 Fe(3+) + 4 H2O = L-lysyl-[4-amino-5-hydroxymethyl-2-methylpyrimidine phosphate synthase] + (2S)-2-amino-5-hydroxy-4-oxopentanoyl-[4-amino-5-hydroxymethyl-2-methylpyrimidine phosphate synthase] + 4-amino-2-methyl-5-(phosphooxymethyl)pyrimidine + 3-oxopropanoate + 2 Fe(2+) + 2 H(+). The protein operates within cofactor biosynthesis; thiamine diphosphate biosynthesis. Its function is as follows. Responsible for the formation of the pyrimidine heterocycle in the thiamine biosynthesis pathway. Catalyzes the formation of hydroxymethylpyrimidine phosphate (HMP-P) from histidine and pyridoxal phosphate (PLP). The protein uses PLP and the active site histidine to form HMP-P, generating an inactive enzyme. The enzyme can only undergo a single turnover, which suggests it is a suicide enzyme. The protein is 4-amino-5-hydroxymethyl-2-methylpyrimidine phosphate synthase of Candida albicans (strain WO-1) (Yeast).